We begin with the raw amino-acid sequence, 293 residues long: Group 3 late-embryogenesis abundant protein, mitochondrial (293 aa).

The N-terminal 31 residues, 1-31 (MFLARNAGRAGYRGVVAYQQAASFSVSSAKA), are a transit peptide targeting the mitochondrion. A compositionally biased stretch (low complexity) spans 27–43 (SSAKAAGSRSSGGSDAG). The tract at residues 27 to 52 (SSAKAAGSRSSGGSDAGDYAREAAEH) is disordered. LEA 11-mer repeat repeat units follow at residues 58 to 68 (KDLKNEASWKA), 83 to 93 (KDTVKEGVHDM), 123 to 133 (KNAAQDTAATL), 134 to 144 (KDKAGSAWNQA), 145 to 155 (KHVVEDKGEDV), 160 to 170 (KDTASKVWGKA), 171 to 181 (KHVAEDVKENA), 199 to 209 (KDKAADVLSGA), and 210 to 220 (KHTAENLAHKA). The disordered stretch occupies residues 217-293 (AHKAQAAIHD…KGPGQAGGRR (77 aa)). Over residues 230-265 (SSGSQSQSQSQSQYRQGQQQGRQDQQQSKSQWGQTS) the composition is skewed to low complexity. Over residues 279 to 293 (GPQGGKGPGQAGGRR) the composition is skewed to gly residues.

It belongs to the LEA type 4 family.

The protein resides in the mitochondrion. Its function is as follows. Mitochondrial heat soluble protein acting as a molecular shield in water-deficient condition. This is Group 3 late-embryogenesis abundant protein, mitochondrial from Ramazzottius varieornatus (Water bear).